The primary structure comprises 205 residues: dTTP/UTP pyrophosphatase (205 aa).

The active-site Proton acceptor is Asp66.

Belongs to the Maf family. YhdE subfamily. Requires a divalent metal cation as cofactor.

It localises to the cytoplasm. The enzyme catalyses dTTP + H2O = dTMP + diphosphate + H(+). It catalyses the reaction UTP + H2O = UMP + diphosphate + H(+). Functionally, nucleoside triphosphate pyrophosphatase that hydrolyzes dTTP and UTP. May have a dual role in cell division arrest and in preventing the incorporation of modified nucleotides into cellular nucleic acids. The protein is dTTP/UTP pyrophosphatase of Anaeromyxobacter sp. (strain Fw109-5).